The primary structure comprises 534 residues: Ulvan lyase NLR42 (534 aa).

Positions 1 to 47 (MVFFKDLFIFKSLIKGSLYSGHMKKKLLNYLPLFALMLFTVSMMAQT) are cleaved as a signal peptide. C59 and C89 are disulfide-bonded. G63, N68, D86, T88, A91, and D92 together coordinate Ca(2+). Y164 lines the substrate pocket. K169 serves as the catalytic Proton acceptor. Substrate-binding positions include 218–223 (SGAAGR) and 288–291 (YRVK). Residue Y288 is the Proton donor/acceptor of the active site. Positions 316 to 449 (PAADIYRIKN…SKWNLESTTL (134 aa)) are ulvan-binding domain. Residues 450–534 (SVDSQQIASV…KVYQTKLIVN (85 aa)) constitute a propeptide, removed by the type IX secretion system (T9SS).

It belongs to the polysaccharide lyase 28 family. It depends on Ca(2+) as a cofactor.

The protein resides in the secreted. Functionally, ulvan lyase involved in ulvan degradation. Ulvan is the main polysaccharide component of the Ulvales (green seaweed) cell wall. It is composed of disaccharide building blocks comprising 3-sulfated rhamnose (Rha3S) linked to D-glucuronic acid (GlcA), L-iduronic acid (IduA), or D-xylose (Xyl). Ulvan lyase catalyzes the endolytic cleavage of the glycosidic bond between Rha3S and the uronic acids GlcA or IduA, producing oligosaccharides that have unsaturated 4-deoxy-L-threo-hex-4-enopyranosiduronic acid (deltaUA) at the non-reducing end. This results eventually in the degradation of the ulvan polysaccharide into deltaUA-Rha3S disaccharides and deltaUA-Rha3S-Xyl-Rha3S tetrasaccharides. In Nonlabens ulvanivorans (Persicivirga ulvanivorans), this protein is Ulvan lyase NLR42.